Consider the following 724-residue polypeptide: Degenerin mec-10 (724 aa).

Over residues 1–15 (MNRNPRMSKFQPNPR) the composition is skewed to polar residues. Positions 1–22 (MNRNPRMSKFQPNPRSRSRFQD) are disordered. At 1 to 122 (MNRNPRMSKF…GQAPNSLYRA (122 aa)) the chain is on the cytoplasmic side. A helical transmembrane segment spans residues 123 to 143 (AWVFLLLICAIQFINQAVAVI). At 144 to 684 (QKYQKMDKIT…FGGHLGLWSG (541 aa)) the chain is on the extracellular side. Residues 229 to 265 (KRGAGEKGTFEPANSACECDEEDGSNECEERSTEKPS) are disordered. Over residues 246 to 255 (ECDEEDGSNE) the composition is skewed to acidic residues. The segment covering 256 to 265 (CEERSTEKPS) has biased composition (basic and acidic residues). N-linked (GlcNAc...) asparagine glycans are attached at residues asparagine 293, asparagine 369, asparagine 463, asparagine 605, and asparagine 624. Residues 685 to 705 (VSVMTCCEFVCLAFELIYMAI) traverse the membrane as a helical segment. Topologically, residues 706–724 (AHHINQQRIRRRENAANEY) are cytoplasmic.

It belongs to the amiloride-sensitive sodium channel (TC 1.A.6) family. As to quaternary structure, component of a non-voltage-gated amiloride-sensitive cation channel complex (also called the degenerin channel complex) composed of at least the mec-2, mec-4, mec-6 and mec-10 subunits; the complex mediates mechanotransduction in touch cells. Interacts with mec-4 and mec-6.

Its subcellular location is the cell membrane. Functionally, subunit of an amiloride-sensitive cation channel (degenerin channel complex) permeable for sodium, potassium, lithium and N-methylglucamine, and required for mechanosensory transduction (touch sensitivity). Negatively regulates the turning step of male mating behavior. This Caenorhabditis elegans protein is Degenerin mec-10.